A 397-amino-acid chain; its full sequence is Dual-specificity RNA methyltransferase RlmN (397 aa).

E120 serves as the catalytic Proton acceptor. One can recognise a Radical SAM core domain in the interval 126–369 (ETDRGTLCVS…VRTPRGRDIL (244 aa)). Cysteines 133 and 372 form a disulfide. [4Fe-4S] cluster contacts are provided by C140, C144, and C147. S-adenosyl-L-methionine contacts are provided by residues 198–199 (GE), S230, 252–254 (SLH), and N329. The S-methylcysteine intermediate role is filled by C372.

Belongs to the radical SAM superfamily. RlmN family. [4Fe-4S] cluster is required as a cofactor.

Its subcellular location is the cytoplasm. The enzyme catalyses adenosine(2503) in 23S rRNA + 2 reduced [2Fe-2S]-[ferredoxin] + 2 S-adenosyl-L-methionine = 2-methyladenosine(2503) in 23S rRNA + 5'-deoxyadenosine + L-methionine + 2 oxidized [2Fe-2S]-[ferredoxin] + S-adenosyl-L-homocysteine. It catalyses the reaction adenosine(37) in tRNA + 2 reduced [2Fe-2S]-[ferredoxin] + 2 S-adenosyl-L-methionine = 2-methyladenosine(37) in tRNA + 5'-deoxyadenosine + L-methionine + 2 oxidized [2Fe-2S]-[ferredoxin] + S-adenosyl-L-homocysteine. In terms of biological role, specifically methylates position 2 of adenine 2503 in 23S rRNA and position 2 of adenine 37 in tRNAs. m2A2503 modification seems to play a crucial role in the proofreading step occurring at the peptidyl transferase center and thus would serve to optimize ribosomal fidelity. In Nitrobacter winogradskyi (strain ATCC 25391 / DSM 10237 / CIP 104748 / NCIMB 11846 / Nb-255), this protein is Dual-specificity RNA methyltransferase RlmN.